The sequence spans 596 residues: Succinate dehydrogenase flavoprotein subunit (596 aa).

FAD is bound by residues 18 to 23 (GAGGAG), 41 to 56 (TKLF…AQGG), and Asp225. His49 carries the tele-8alpha-FAD histidine modification. Residues His246 and Thr258 each coordinate substrate. Arg290 functions as the Proton acceptor in the catalytic mechanism. His357 is a binding site for substrate. FAD is bound at residue Glu391. Arg402 contacts substrate. 407–408 (SL) lines the FAD pocket.

The protein belongs to the FAD-dependent oxidoreductase 2 family. FRD/SDH subfamily. As to quaternary structure, part of an enzyme complex containing four subunits: a flavoprotein, an iron-sulfur, cytochrome b-556, and a hydrophobic anchor protein. Requires FAD as cofactor.

It localises to the cell inner membrane. It carries out the reaction a quinone + succinate = fumarate + a quinol. Its pathway is carbohydrate metabolism; tricarboxylic acid cycle; fumarate from succinate (bacterial route): step 1/1. The sequence is that of Succinate dehydrogenase flavoprotein subunit (sdhA) from Rickettsia felis (strain ATCC VR-1525 / URRWXCal2) (Rickettsia azadi).